Reading from the N-terminus, the 399-residue chain is Multi-drug resistance efflux pump PmrA (399 aa).

10 helical membrane-spanning segments follow: residues 12–34 (IAWF…MPIF), 49–71 (AGLA…GILA), 84–106 (GLAM…LIFL), 140–162 (LSTG…AELF), 167–186 (VFLL…ICFI), 217–239 (LFLT…ALYV), 248–270 (LLFV…AGVM), 306–328 (LGLY…NALL), 340–362 (VFAF…GSAV), and 366–388 (FGYH…FNLI).

It belongs to the major facilitator superfamily. TCR/Tet family.

It localises to the cell membrane. Functionally, efflux pump for various substrates. The polypeptide is Multi-drug resistance efflux pump PmrA (pmrA) (Streptococcus pneumoniae serotype 4 (strain ATCC BAA-334 / TIGR4)).